The chain runs to 530 residues: T-box transcription factor TBX21 (530 aa).

Positions methionine 1 to threonine 55 are disordered. Serine 52 bears the Phosphoserine mark. A Phosphothreonine modification is found at threonine 55. A phosphotyrosine mark is found at tyrosine 76 and tyrosine 117. A DNA-binding region (T-box) is located at residues leucine 140–glutamate 325. Residue tyrosine 219 is modified to Phosphotyrosine; by ABL1. Serine 224 carries the phosphoserine modification. The residue at position 265 (tyrosine 265) is a Phosphotyrosine; by ABL1. Threonine 302 is subject to Phosphothreonine. Tyrosine 304 is modified (phosphotyrosine; by ABL1). Residue lysine 313 forms a Glycyl lysine isopeptide (Lys-Gly) (interchain with G-Cter in ubiquitin) linkage. The segment at alanine 444 to asparagine 530 is disordered. Residues serine 462 to proline 482 show a composition bias toward polar residues. A compositionally biased stretch (low complexity) spans serine 498–proline 515. A Phosphoserine modification is found at serine 508. Residue tyrosine 525 is modified to Phosphotyrosine; by ITK.

In terms of assembly, interacts with RUNX1 and RUNX3. Interacts with ITK. The phosphorylated form (at Tyr-525) interacts with GATA3. Interacts with ABL1. Interacts with RELA. The phosphorylated form (at Thr-302) interacts with NFATC2. Interacts with KDM6B. Interacts with SMARCA4 in a KDM6B-dependent manner. Interacts with CCTN1 and CDK9. Interacts with USP10. Phosphorylations at Ser-52, Tyr-76, Ser-224 and Ser-508 are regulated by mTORC1. Phosphorylation at Tyr-525 is essential for its interaction GATA3. Phosphorylation at Tyr-219, Tyr-265 and Tyr-304 enhances its transcriptional activator activity. Phosphorylation at Thr-302 is required for its interaction with NFATC2. Post-translationally, ubiquitinated at Lys-313, leading to its degradation by the proteasome. Ubiquitination is essential for controlling protein stability, binding to the T-box-binding element of the IFN-gamma promoter, and for interaction with NFATC2 through induction of phosphorylation at Thr-302. Deubiquitinated by USP10 leading to its stabilization. T-cell specific. Expressed in regulatory T (TReg) cells.

Its subcellular location is the nucleus. Functionally, lineage-defining transcription factor which initiates Th1 lineage development from naive Th precursor cells both by activating Th1 genetic programs and by repressing the opposing Th2 and Th17 genetic programs. Activates transcription of a set of genes important for Th1 cell function, including those encoding IFN-gamma and the chemokine receptor CXCR3. Activates IFNG and CXCR3 genes in part by recruiting chromatin remodeling complexes including KDM6B, a SMARCA4-containing SWI/SNF-complex, and an H3K4me2-methyltransferase complex to their promoters and all of these complexes serve to establish a more permissive chromatin state conducive with transcriptional activation. Can activate Th1 genes also via recruitment of Mediator complex and P-TEFb (composed of CDK9 and CCNT1/cyclin-T1) in the form of the super elongation complex (SEC) to super-enhancers and associated genes in activated Th1 cells. Inhibits the Th17 cell lineage commitment by blocking RUNX1-mediated transactivation of Th17 cell-specific transcriptinal regulator RORC. Inhibits the Th2 cell lineage commitment by suppressing the production of Th2 cytokines, such as IL-4, IL-5, and IL- 13, via repression of transcriptional regulators GATA3 and NFATC2. Protects Th1 cells from amplifying aberrant type-I IFN response in an IFN-gamma abundant microenvironment by acting as a repressor of type-I IFN transcription factors and type-I IFN- stimulated genes. Acts as a regulator of antiviral B-cell responses; controls chronic viral infection by promoting the antiviral antibody IgG2a isotype switching and via regulation of a broad antiviral gene expression program. The chain is T-box transcription factor TBX21 (Tbx21) from Mus musculus (Mouse).